We begin with the raw amino-acid sequence, 182 residues long: MAQKERGERDERDGEFVDRLVHINRVAKVVKGGRRFGFAALVVVGDQKGRVGFGHGKAREVPEAVRKATEAAKRGMIYVPLRSGRTLHHDLEGRHGAGRVLLRSASAGTGIIAGGPMRAIFETLGMQDVVAKSLGSSNPYNMVRATFDALKHQMHPRDIAVQRGIKYSILQARRQHLVDAEG.

The region spanning 16 to 79 (FVDRLVHINR…EAAKRGMIYV (64 aa)) is the S5 DRBM domain.

It belongs to the universal ribosomal protein uS5 family. Part of the 30S ribosomal subunit. Contacts proteins S4 and S8.

Its function is as follows. With S4 and S12 plays an important role in translational accuracy. Functionally, located at the back of the 30S subunit body where it stabilizes the conformation of the head with respect to the body. The protein is Small ribosomal subunit protein uS5 of Bartonella quintana (strain Toulouse) (Rochalimaea quintana).